We begin with the raw amino-acid sequence, 142 residues long: MADTFEFEIVTPDKLVVKDVAEQMQIPGKNGYLGILPGHAPLITELSIGEISYTLRGETKYLALAWGFAEVLPDKVTILAEAAERPEEIDVARAQEAKKRAEQRLQTSGPELDYQRALNAVKRAEVRLQVASHATSKAAVGH.

It belongs to the ATPase epsilon chain family. In terms of assembly, F-type ATPases have 2 components, CF(1) - the catalytic core - and CF(0) - the membrane proton channel. CF(1) has five subunits: alpha(3), beta(3), gamma(1), delta(1), epsilon(1). CF(0) has three main subunits: a, b and c.

The protein resides in the cell inner membrane. In terms of biological role, produces ATP from ADP in the presence of a proton gradient across the membrane. This Koribacter versatilis (strain Ellin345) protein is ATP synthase epsilon chain.